The sequence spans 217 residues: Peroxiredoxin Q, chloroplastic (217 aa).

The transit peptide at 1-66 (MAFAASTACC…RRRAASTGIV (66 aa)) directs the protein to the chloroplast. In terms of domain architecture, Thioredoxin spans 70-217 (VSKGSVPPNF…GETLKIIQNL (148 aa)). Cys112 serves as the catalytic Cysteine sulfenic acid (-SOH) intermediate. Cysteines 112 and 117 form a disulfide.

It belongs to the peroxiredoxin family. BCP/PrxQ subfamily. As to quaternary structure, monomer.

The protein localises to the plastid. Its subcellular location is the chloroplast thylakoid lumen. The catalysed reaction is a hydroperoxide + [thioredoxin]-dithiol = an alcohol + [thioredoxin]-disulfide + H2O. Functionally, thiol-specific peroxidase that catalyzes the reduction of hydrogen peroxide and organic hydroperoxides to water and alcohols, respectively. Plays a role in cell protection against oxidative stress by detoxifying peroxides. This chain is Peroxiredoxin Q, chloroplastic (PRX1), found in Triticum aestivum (Wheat).